Reading from the N-terminus, the 607-residue chain is Serum albumin (607 aa).

An N-terminal signal peptide occupies residues 1 to 16 (MKWTILTALLIISAES). Positions 17-20 (KNLY) are excised as a propeptide. 3 Albumin domains span residues 19-209 (LYKR…TQLK), 210-401 (KALH…HVLA), and 403-600 (AIKE…ILIE). His27 contributes to the Cu cation binding site. 17 cysteine pairs are disulfide-bonded: Cys77/Cys86, Cys99/Cys115, Cys114/Cys125, Cys147/Cys192, Cys191/Cys200, Cys223/Cys269, Cys268/Cys276, Cys288/Cys302, Cys301/Cys312, Cys339/Cys384, Cys383/Cys392, Cys415/Cys461, Cys460/Cys471, Cys484/Cys500, Cys499/Cys510, Cys537/Cys582, and Cys581/Cys590. Residues His270 and Asp272 each coordinate Zn(2+). Ca(2+)-binding residues include Asp272 and Glu275.

It belongs to the ALB/AFP/VDB family. As to expression, plasma. In the skin, widely distributed around the membranes of epithelial layer cells and within the stratum spongiosum of the dermis (at protein level).

The protein localises to the secreted. Functionally, serum albumin, the main protein of plasma, has a good binding capacity for water, Ca(2+), Na(+), K(+), fatty acids, hormones, bilirubin and drugs. Its main function is the regulation of the colloidal osmotic pressure of blood. Potent inhibitor of trypsin but has no inhibitory effect on thrombin, chymotrypsin, elastase and subtilisin. In Bombina maxima (Giant fire-bellied toad), this protein is Serum albumin.